We begin with the raw amino-acid sequence, 448 residues long: Probable glycine dehydrogenase (decarboxylating) subunit 1 (448 aa).

It belongs to the GcvP family. N-terminal subunit subfamily. In terms of assembly, the glycine cleavage system is composed of four proteins: P, T, L and H. In this organism, the P 'protein' is a heterodimer of two subunits.

The catalysed reaction is N(6)-[(R)-lipoyl]-L-lysyl-[glycine-cleavage complex H protein] + glycine + H(+) = N(6)-[(R)-S(8)-aminomethyldihydrolipoyl]-L-lysyl-[glycine-cleavage complex H protein] + CO2. Its function is as follows. The glycine cleavage system catalyzes the degradation of glycine. The P protein binds the alpha-amino group of glycine through its pyridoxal phosphate cofactor; CO(2) is released and the remaining methylamine moiety is then transferred to the lipoamide cofactor of the H protein. In Listeria innocua serovar 6a (strain ATCC BAA-680 / CLIP 11262), this protein is Probable glycine dehydrogenase (decarboxylating) subunit 1.